The chain runs to 275 residues: Secreted RxLR effector protein 153 (275 aa).

The first 27 residues, 1–27, serve as a signal peptide directing secretion; it reads MRNRAFLFGLFFIEYACLVLFAAPTRA. Asparagine 45 carries N-linked (GlcNAc...) asparagine glycosylation. A RxLR-dEER motif is present at residues 48–63; it reads RTLQADDSKRISAEER.

Belongs to the RxLR effector family.

Its subcellular location is the secreted. It localises to the host cell membrane. In terms of biological role, secreted effector that completely suppresses the host cell death induced by cell death-inducing proteins. The chain is Secreted RxLR effector protein 153 from Plasmopara viticola (Downy mildew of grapevine).